A 361-amino-acid polypeptide reads, in one-letter code: Hydroxycarboxylate dehydrogenase B (361 aa).

Residues histidine 48, 122 to 124, 178 to 182, histidine 234, asparagine 270, and 313 to 316 contribute to the NAD(+) site; these read GRI, LLDYA, and GEWE.

Belongs to the LDH2/MDH2 oxidoreductase family.

It catalyses the reaction 2-hydroxyglutarate + NADP(+) = 2-oxoglutarate + NADPH + H(+). It carries out the reaction 2-hydroxyglutarate + NAD(+) = 2-oxoglutarate + NADH + H(+). The enzyme catalyses 3-phenyllactate + NADP(+) = 3-phenylpyruvate + NADPH + H(+). The catalysed reaction is 3-phenyllactate + NAD(+) = 3-phenylpyruvate + NADH + H(+). It catalyses the reaction (2R)-2-hydroxy-3-(4-hydroxyphenyl)propanoate + NAD(+) = 3-(4-hydroxyphenyl)pyruvate + NADH + H(+). It carries out the reaction (2R)-2-hydroxy-3-(4-hydroxyphenyl)propanoate + NADP(+) = 3-(4-hydroxyphenyl)pyruvate + NADPH + H(+). The enzyme catalyses (2R)-3-(3,4-dihydroxyphenyl)lactate + NADP(+) = 3-(3,4-dihydroxyphenyl)pyruvate + NADPH + H(+). The catalysed reaction is (2R)-3-(3,4-dihydroxyphenyl)lactate + NAD(+) = 3-(3,4-dihydroxyphenyl)pyruvate + NADH + H(+). Catalyzes the NAD(P)H-dependent reduction of 2-oxoglutarate, phenylpyruvate and (4-hydroxyphenyl)pyruvate, leading to the respective 2-hydroxycarboxylate in vitro. Shows a preference for NADPH over NADH as a redox partner. Do not catalyze the reverse reactions. The polypeptide is Hydroxycarboxylate dehydrogenase B (Escherichia coli O157:H7).